We begin with the raw amino-acid sequence, 276 residues long: MKGQILREMRVLKAITPDFEVQRRVAFIKAKLREAHSKTLVLGISGGVDSSVAGRLCQLAVNELNQETDSQQYRFIAVRLPYLVQKDEHEAQMACEFIQPSKLVTVNVGSGSDGIHTETLTGFKAAGLELPEASKVDFVKGNVKARMRMIAQYEIAGLTGGLVVGTDHSAENITGFYTKWGDGACDLAPLFGLNKRQVRQIARYLGAPDVLVVKAPTADLECHRPGLEDEVALGLTYDQIDDFLEGKEVPRSAEDKLIGIYKATQHKRQPIPTIYD.

43–50 (GISGGVDS) provides a ligand contact to ATP. Residue Asp49 coordinates Mg(2+). Arg146 provides a ligand contact to deamido-NAD(+). Residue Thr166 participates in ATP binding. Glu171 is a Mg(2+) binding site. Positions 179 and 186 each coordinate deamido-NAD(+). Lys195 and Thr217 together coordinate ATP. Position 266–267 (266–267 (HK)) interacts with deamido-NAD(+).

The protein belongs to the NAD synthetase family. Homodimer.

The enzyme catalyses deamido-NAD(+) + NH4(+) + ATP = AMP + diphosphate + NAD(+) + H(+). It functions in the pathway cofactor biosynthesis; NAD(+) biosynthesis; NAD(+) from deamido-NAD(+) (ammonia route): step 1/1. Its function is as follows. Catalyzes the ATP-dependent amidation of deamido-NAD to form NAD. Uses ammonia as a nitrogen source. The protein is NH(3)-dependent NAD(+) synthetase of Shewanella amazonensis (strain ATCC BAA-1098 / SB2B).